An 80-amino-acid chain; its full sequence is OMEGA-myrmeciitoxin(02)-Mg1a (80 aa).

The N-terminal stretch at 1-30 (MKNNYISTCIVYLMAALLLISVISIKECTA) is a signal peptide. Residues 35-75 (YGDPCSDDLKDYCIHGDCFFLKELNQPACRCYTGYYGSRCE) enclose the EGF-like domain. 3 disulfides stabilise this stretch: cysteine 39-cysteine 52, cysteine 47-cysteine 63, and cysteine 65-cysteine 74.

Belongs to the EGF domain peptide family. As to expression, expressed by the venom gland.

Its subcellular location is the secreted. Ant peptide with probable defensive activity which acts as a potent agonist of the mammalian epidermal growth factor receptor (EGFR) (EC(50)=6.3 nM). Mimics, both structurally and functionally, vertebrate epidermal growth factor (EGF) peptide hormones. In vivo, intraplantar injection in mice causes long-lasting (several days) hypersensitivity of the injected paw to both mechanical and thermal stimuli. Its long-lasting effect is unusual for venom toxins whose effects are usually immediate. One possible explanation is that it would reduce the duration of a nest attack, discourage future attacks, or enhance the actions of subsequent exposure to other pain-inducing venom peptides. The protein is OMEGA-myrmeciitoxin(02)-Mg1a of Myrmecia gulosa (Red bulldog ant).